Consider the following 289-residue polypeptide: Coiled-coil domain-containing protein 137 (289 aa).

Disordered regions lie at residues 1-64 (MAGA…QEIP), 149-184 (EVQA…EKAA), and 204-225 (QPPE…GRRS). Residues 7–20 (GAAVSRVQAGPGSP) are compositionally biased toward low complexity. Ser-19 is subject to Phosphoserine. Positions 155–197 (KEKSEQKKAKKAFQKRRLDKVRRKKEEKAADRLEQELLRDTVK) form a coiled coil. Basic residues predominate over residues 162-177 (KAKKAFQKRRLDKVRR). Phosphoserine is present on Ser-233. The stretch at 247 to 273 (RQRIVEEERERAVQAYRALKQRQQQLH) forms a coiled coil. The segment at 265–289 (LKQRQQQLHGERPHLTSRKKPEPQL) is disordered. The span at 273–289 (HGERPHLTSRKKPEPQL) shows a compositional bias: basic and acidic residues.

It is found in the chromosome. The sequence is that of Coiled-coil domain-containing protein 137 (CCDC137) from Homo sapiens (Human).